Reading from the N-terminus, the 371-residue chain is Queuine tRNA-ribosyltransferase (371 aa).

The active-site Proton acceptor is the aspartate 90. Substrate is bound by residues 90 to 94 (DSGGF), aspartate 144, glutamine 189, and glycine 215. Residues 246 to 252 (GVGTPEN) are RNA binding. The active-site Nucleophile is the aspartate 265. The tract at residues 270–274 (TRNAR) is RNA binding; important for wobble base 34 recognition. The Zn(2+) site is built by cysteine 303, cysteine 305, cysteine 308, and histidine 334.

Belongs to the queuine tRNA-ribosyltransferase family. Homodimer. Within each dimer, one monomer is responsible for RNA recognition and catalysis, while the other monomer binds to the replacement base PreQ1. Zn(2+) serves as cofactor.

The catalysed reaction is 7-aminomethyl-7-carbaguanine + guanosine(34) in tRNA = 7-aminomethyl-7-carbaguanosine(34) in tRNA + guanine. It functions in the pathway tRNA modification; tRNA-queuosine biosynthesis. Its function is as follows. Catalyzes the base-exchange of a guanine (G) residue with the queuine precursor 7-aminomethyl-7-deazaguanine (PreQ1) at position 34 (anticodon wobble position) in tRNAs with GU(N) anticodons (tRNA-Asp, -Asn, -His and -Tyr). Catalysis occurs through a double-displacement mechanism. The nucleophile active site attacks the C1' of nucleotide 34 to detach the guanine base from the RNA, forming a covalent enzyme-RNA intermediate. The proton acceptor active site deprotonates the incoming PreQ1, allowing a nucleophilic attack on the C1' of the ribose to form the product. After dissociation, two additional enzymatic reactions on the tRNA convert PreQ1 to queuine (Q), resulting in the hypermodified nucleoside queuosine (7-(((4,5-cis-dihydroxy-2-cyclopenten-1-yl)amino)methyl)-7-deazaguanosine). This Helicobacter acinonychis (strain Sheeba) protein is Queuine tRNA-ribosyltransferase.